The primary structure comprises 100 residues: Small ribosomal subunit protein uS14c (100 aa).

Belongs to the universal ribosomal protein uS14 family. As to quaternary structure, part of the 30S ribosomal subunit.

The protein resides in the plastid. The protein localises to the chloroplast. In terms of biological role, binds 16S rRNA, required for the assembly of 30S particles. In Citrus sinensis (Sweet orange), this protein is Small ribosomal subunit protein uS14c.